A 31-amino-acid chain; its full sequence is Cyclotide vibi-H (31 aa).

A cross-link (cyclopeptide (Gly-Asn)) is located at residues 1–31 (GLLPCAESCVYIPCLTTVIGCSCKSKVCYKN). Disulfide bonds link Cys-5–Cys-21, Cys-9–Cys-23, and Cys-14–Cys-28.

In terms of processing, this is a cyclic peptide.

Functionally, probably participates in a plant defense mechanism. Has cytotoxic activity, active against a human lymphoma cell line with an IC(50) of 1.6 uM. This Viola biflora (Yellow wood violet) protein is Cyclotide vibi-H.